Consider the following 172-residue polypeptide: 3-hydroxydecanoyl-[acyl-carrier-protein] dehydratase (172 aa).

Residue histidine 71 is part of the active site.

Belongs to the thioester dehydratase family. FabA subfamily. Homodimer.

The protein localises to the cytoplasm. It catalyses the reaction a (3R)-hydroxyacyl-[ACP] = a (2E)-enoyl-[ACP] + H2O. The enzyme catalyses (3R)-hydroxydecanoyl-[ACP] = (2E)-decenoyl-[ACP] + H2O. The catalysed reaction is (2E)-decenoyl-[ACP] = (3Z)-decenoyl-[ACP]. It participates in lipid metabolism; fatty acid biosynthesis. In terms of biological role, necessary for the introduction of cis unsaturation into fatty acids. Catalyzes the dehydration of (3R)-3-hydroxydecanoyl-ACP to E-(2)-decenoyl-ACP and then its isomerization to Z-(3)-decenoyl-ACP. Can catalyze the dehydratase reaction for beta-hydroxyacyl-ACPs with saturated chain lengths up to 16:0, being most active on intermediate chain length. The sequence is that of 3-hydroxydecanoyl-[acyl-carrier-protein] dehydratase from Pectobacterium carotovorum subsp. carotovorum (strain PC1).